The following is a 290-amino-acid chain: Small ribosomal subunit biogenesis GTPase RsgA (290 aa).

Residues 62-213 (KNSLVRPPIV…IADTPGFSSL (152 aa)) form the CP-type G domain. GTP contacts are provided by residues 111-114 (SKTD) and 156-164 (GQTGVGKTT). Cys-237, Cys-242, His-244, and Cys-250 together coordinate Zn(2+).

It belongs to the TRAFAC class YlqF/YawG GTPase family. RsgA subfamily. Monomer. Associates with 30S ribosomal subunit, binds 16S rRNA. It depends on Zn(2+) as a cofactor.

The protein localises to the cytoplasm. In terms of biological role, one of several proteins that assist in the late maturation steps of the functional core of the 30S ribosomal subunit. Helps release RbfA from mature subunits. May play a role in the assembly of ribosomal proteins into the subunit. Circularly permuted GTPase that catalyzes slow GTP hydrolysis, GTPase activity is stimulated by the 30S ribosomal subunit. This is Small ribosomal subunit biogenesis GTPase RsgA from Streptococcus mutans serotype c (strain ATCC 700610 / UA159).